A 246-amino-acid polypeptide reads, in one-letter code: Phycocyanobilin:ferredoxin oxidoreductase (246 aa).

This sequence belongs to the HY2 family.

The catalysed reaction is (2R,3Z)-phycocyanobilin + 4 oxidized [2Fe-2S]-[ferredoxin] = biliverdin IXalpha + 4 reduced [2Fe-2S]-[ferredoxin] + 4 H(+). Functionally, catalyzes the four-electron reduction of biliverdin IX-alpha (2-electron reduction at both the A and D rings); the reaction proceeds via an isolatable 2-electron intermediate, 181,182-dihydrobiliverdin. The chain is Phycocyanobilin:ferredoxin oxidoreductase from Crocosphaera subtropica (strain ATCC 51142 / BH68) (Cyanothece sp. (strain ATCC 51142)).